The sequence spans 156 residues: Small ribosomal subunit protein uS7 (156 aa).

It belongs to the universal ribosomal protein uS7 family. As to quaternary structure, part of the 30S ribosomal subunit. Contacts proteins S9 and S11.

Its function is as follows. One of the primary rRNA binding proteins, it binds directly to 16S rRNA where it nucleates assembly of the head domain of the 30S subunit. Is located at the subunit interface close to the decoding center, probably blocks exit of the E-site tRNA. This is Small ribosomal subunit protein uS7 from Neisseria gonorrhoeae (strain ATCC 700825 / FA 1090).